Consider the following 189-residue polypeptide: GTPase HRas (189 aa).

An N-acetylmethionine; in GTPase HRas; alternate modification is found at M1. T2 bears the N-acetylthreonine; in GTPase HRas, N-terminally processed mark. GTP is bound by residues 13-18, 29-35, 59-60, 116-119, and 145-147; these read GVGKSA, VDEYDPT, AG, NKCD, and SAK. Residues 32–40 carry the Effector region motif; it reads YDPTIEDSY. The (Microbial infection) O-linked (Glc) threonine; by P.sordellii toxin TcsL glycan is linked to T35. The residue at position 118 (C118) is an S-nitrosocysteine. A hypervariable region region spans residues 166-185; sequence HKLRKLNPPDESGPGCMSCK. A Glycyl lysine isopeptide (Lys-Gly) (interchain with G-Cter in ubiquitin) cross-link involves residue K170. Residue C181 is the site of S-palmitoyl cysteine attachment. A lipid anchor (S-(15-deoxy-Delta12,14-prostaglandin J2-9-yl)cysteine; alternate) is attached at C184. A lipid anchor (S-palmitoyl cysteine; alternate) is attached at C184. At C186 the chain carries Cysteine methyl ester. C186 is lipidated: S-farnesyl cysteine. Positions 187–189 are cleaved as a propeptide — removed in mature form; the sequence is VLS.

Belongs to the small GTPase superfamily. Ras family. In terms of assembly, in its GTP-bound form interacts with PLCE1. Interacts with TBC1D10C. Interacts with RGL3. Interacts with HSPD1. Found in a complex with at least BRAF, HRAS, MAP2K1, MAPK3 and RGS14. Interacts (active GTP-bound form) with RGS14 (via RBD 1 domain). Forms a signaling complex with RASGRP1 and DGKZ. Interacts with RASSF5. Interacts with PDE6D. Interacts with IKZF3. Interacts with RACK1. Interacts with PIK3CG; the interaction is required for membrane recruitment and beta-gamma G protein dimer-dependent activation of the PI3K gamma complex PIK3CG:PIK3R6. Interacts with RAPGEF2. Interacts (active GTP-bound form) with both SHOC2 and PP1c (all isoforms) to form a tertiary complex; SHOC2 and PP1c preferably bind M-Ras/MRAS, but they also bind K-Ras/KRAS, N-Ras/NRAS and H-Ras/HRAS. Interacts (GTP-bound form) with MAPKAP1/SIN1; inhibiting H-Ras/HRAS activity. Post-translationally, palmitoylated by the ZDHHC9-GOLGA7 complex. A continuous cycle of de- and re-palmitoylation regulates rapid exchange between plasma membrane and Golgi. S-nitrosylated; critical for redox regulation. Important for stimulating guanine nucleotide exchange. No structural perturbation on nitrosylation. In terms of processing, the covalent modification of cysteine by 15-deoxy-Delta12,14-prostaglandin-J2 is autocatalytic and reversible. It may occur as an alternative to other cysteine modifications, such as S-nitrosylation and S-palmitoylation. Post-translationally, acetylation at Lys-104 prevents interaction with guanine nucleotide exchange factors (GEFs). Fatty-acylated at Lys-170. In terms of processing, ubiquitinated by the BCR(LZTR1) E3 ubiquitin ligase complex at Lys-170 in a non-degradative manner, leading to inhibit Ras signaling by decreasing Ras association with membranes. Post-translationally, (Microbial infection) Glucosylated at Thr-35 by P.sordellii toxin TcsL. Monoglucosylation completely prevents the recognition of the downstream effector, blocking the GTPases in their inactive form, leading to inhibit Ras signaling. As to expression, widely expressed.

Its subcellular location is the cell membrane. The protein resides in the golgi apparatus. It is found in the golgi apparatus membrane. The protein localises to the nucleus. It localises to the cytoplasm. Its subcellular location is the perinuclear region. The catalysed reaction is GTP + H2O = GDP + phosphate + H(+). Its activity is regulated as follows. Alternates between an inactive form bound to GDP and an active form bound to GTP. Activated by a guanine nucleotide-exchange factor (GEF) and inactivated by a GTPase-activating protein (GAP). Functionally, involved in the activation of Ras protein signal transduction. Ras proteins bind GDP/GTP and possess intrinsic GTPase activity. This is GTPase HRas (HRAS) from Homo sapiens (Human).